Consider the following 869-residue polypeptide: MEEASSSTGSAGGAGPSVPNLPSTSEAAIGQTNLEPESIALLQSQLQEYRQKQMDLIGHFQRAQQELSVQHMHNLYAALQQQQQLQNLQTERSAVNPLLISQQHSTEDQNSGPAAPLSLANSLTNLLSSSNGNLSVPQTPTKEHHPTAPTSNRKCDLPRSNSTTISQLTKDRLKNMIANRSKGESNSQSNLMSNSVTANGNGHDNGRKLKNSNSQVNVSSPHFEPYRLPTSLANAHNLQQASEFQLRKVNSEPNLKMRIRAKLLSKGSSPVQHVQQNNSQFNFTHPQLKRSDSETSQNVPLDFMQSSSQTNLPHLMLPSPSLPNLAAAGAFHGLNLPVGQDLNAFMAVANLSPFLSLPSLLNKKLELGGLTDEGDRNGLIGSSSTSSLASNVSMGSHQYQSLLKQQIRDLVLRRKSLVREDPEGEGLAELYNGLLPQAKLQQLQALAAESGFLAKQEPTCTTGLGYDQAMVRHECCCGNNASHVENGGRIQSIWSKLIEHGHVQKCEKVTAKKASLEQLQLVHSQTYTTFFAVSPTACLKIDANSLPLKRFLQLPCGGIGVDSDTYFNDASTQTAARLAAGTLIELSSQVAEGRLKNGFACIRPPGHHAEHEQAMGFCFFNNVAVAVKVLQTKYPAQCAKIAIIDWDVHHGNGTQLSFENDPNVLYMSLHRHDKGNFFPGTGSVTEVGKNDAKGLTVNVPFSGDVMRDPEYLAAWRTVIEPVMASFCPDFIIVSAGFDACHGHPNALGGYEVTPEMFGYMTKSLLNYASGKVVLALEGGYDLKSISEAAQQCVQALIGESDDAGRLSSVALESLPNPSAVETLQKVIAIHKSYWPALHGQEAAINTTEMQWRNLKLQVQMQQQQQQQQT.

3 disordered regions span residues 1–25 (MEEA…PSTS), 128–167 (SSSN…TISQ), and 180–218 (RSKG…QVNV). Over residues 184–202 (ESNSQSNLMSNSVTANGNG) the composition is skewed to polar residues. Ser251 is subject to Phosphoserine. Residues 460-802 (CTTGLGYDQA…VQALIGESDD (343 aa)) form a histone deacetylase region. His608 is a catalytic residue.

This sequence belongs to the histone deacetylase family. HD type 2 subfamily. In terms of assembly, interacts with mef-2. Phosphorylated by serine/threonine-protein kinase kin-29 at Ser-251; the phosphorylation inhibits repression of transcription by mef-2. May be phosphorylated by either cyclic-AMP dependent or cyclic-GMP dependent protein kinases. In terms of tissue distribution, expressed in body-wall muscle cells, hypodermal seam cells and neuronal cells including sensory amphid neuronal processes, the nerve ring, ventral nerve cords and motor neuronal commissures.

It is found in the nucleus. The catalysed reaction is N(6)-acetyl-L-lysyl-[histone] + H2O = L-lysyl-[histone] + acetate. Functionally, responsible for the deacetylation of lysine residues on the N-terminal part of the core histones (H2A, H2B, H3 and H4). Histone deacetylation gives a tag for epigenetic repression and plays an important role in transcriptional regulation, cell cycle progression and developmental events. Histone deacetylases act via the formation of large multiprotein complexes. Involved in transduction of sensory signals, together with egl-4, kin-29 and mef-2; binding to transcription factor mef-2 enables negative modulation of chemoreceptor gene expression in chemosensory neurons. May be involved in muscle development. The sequence is that of Histone deacetylase 4 (hda-4) from Caenorhabditis elegans.